Here is a 302-residue protein sequence, read N- to C-terminus: Possible hemolysin C (302 aa).

CBS domains follow at residues 79-141 (MVPR…NFRL) and 144-201 (LIRK…IDDE).

The protein belongs to the UPF0053 family. Hemolysin C subfamily.

This chain is Possible hemolysin C (tlyC), found in Rickettsia bellii (strain OSU 85-389).